The following is a 305-amino-acid chain: tRNA pseudouridine synthase B (305 aa).

The active-site Nucleophile is aspartate 39.

Belongs to the pseudouridine synthase TruB family. Type 1 subfamily.

It catalyses the reaction uridine(55) in tRNA = pseudouridine(55) in tRNA. Its function is as follows. Responsible for synthesis of pseudouridine from uracil-55 in the psi GC loop of transfer RNAs. This Staphylococcus aureus (strain MW2) protein is tRNA pseudouridine synthase B.